Consider the following 403-residue polypeptide: Imidazolonepropionase (403 aa).

The Fe(3+) site is built by His-69 and His-71. Zn(2+)-binding residues include His-69 and His-71. 4-imidazolone-5-propanoate-binding residues include Arg-78, Tyr-141, and His-174. An N-formimidoyl-L-glutamate-binding site is contributed by Tyr-141. His-239 is a binding site for Fe(3+). His-239 is a Zn(2+) binding site. Gln-242 serves as a coordination point for 4-imidazolone-5-propanoate. Asp-314 contributes to the Fe(3+) binding site. Asp-314 lines the Zn(2+) pocket. Residues Asn-316 and Gly-318 each coordinate N-formimidoyl-L-glutamate. 4-imidazolone-5-propanoate is bound at residue Ser-319.

This sequence belongs to the metallo-dependent hydrolases superfamily. HutI family. Zn(2+) is required as a cofactor. It depends on Fe(3+) as a cofactor.

It localises to the cytoplasm. The catalysed reaction is 4-imidazolone-5-propanoate + H2O = N-formimidoyl-L-glutamate. Its pathway is amino-acid degradation; L-histidine degradation into L-glutamate; N-formimidoyl-L-glutamate from L-histidine: step 3/3. In terms of biological role, catalyzes the hydrolytic cleavage of the carbon-nitrogen bond in imidazolone-5-propanoate to yield N-formimidoyl-L-glutamate. It is the third step in the universal histidine degradation pathway. This chain is Imidazolonepropionase, found in Legionella pneumophila (strain Corby).